The following is a 495-amino-acid chain: Membrane-bound glycerophospholipid O-acyltransferase 1 (495 aa).

The next 6 helical transmembrane spans lie at Val34–Leu54, Ile70–Leu90, Ile126–Thr146, Pro180–Cys200, Thr238–Leu258, and Tyr297–Val317. Catalysis depends on residues Asn350 and His381. Helical transmembrane passes span Val371 to Phe391, Thr426 to Val446, and Ile450 to Phe470. Ser488 is subject to Phosphoserine.

The protein belongs to the membrane-bound acyltransferase family. In terms of tissue distribution, expressed in neutrophils.

The protein localises to the endoplasmic reticulum membrane. It carries out the reaction a 1-acyl-sn-glycero-3-phospho-L-serine + an acyl-CoA = a 1,2-diacyl-sn-glycero-3-phospho-L-serine + CoA. The catalysed reaction is a 1-acyl-sn-glycero-3-phosphocholine + an acyl-CoA = a 1,2-diacyl-sn-glycero-3-phosphocholine + CoA. The enzyme catalyses a 1-acyl-sn-glycero-3-phosphoethanolamine + an acyl-CoA = a 1,2-diacyl-sn-glycero-3-phosphoethanolamine + CoA. It catalyses the reaction 1-(9Z-octadecenoyl)-sn-glycero-3-phospho-L-serine + (9Z)-octadecenoyl-CoA = 1,2-di-(9Z)-octadecenoyl-sn-glycero-3-phospho-L-serine + CoA. It carries out the reaction 1-(9Z-octadecenoyl)-sn-glycero-3-phospho-L-serine + octadecanoyl-CoA = 1-(9Z-octadecenoyl)-2-octadecanoyl-sn-glycero-3-phospho-L-serine + CoA. The catalysed reaction is 1-(9Z-octadecenoyl)-sn-glycero-3-phospho-L-serine + (9Z)-hexadecenoyl-CoA = 1-(9Z-octadecenoyl)-2-(9Z-hexadecenoyl)-sn-glycero-3-phospho-L-serine + CoA. The enzyme catalyses 1-(9Z-octadecenoyl)-sn-glycero-3-phospho-L-serine + (9Z,12Z)-octadecadienoyl-CoA = 1-(9Z-octadecenoyl)-2-(9Z,12Z-octadienoyl)-sn-glycero-3-phospho-L-serine + CoA. It catalyses the reaction 1-hexadecanoyl-sn-glycero-3-phosphocholine + (9Z)-octadecenoyl-CoA = 1-hexadecanoyl-2-(9Z-octadecenoyl)-sn-glycero-3-phosphocholine + CoA. It carries out the reaction a 1-O-(1Z-alkenyl)-sn-glycero-3-phosphoethanolamine + (9Z)-octadecenoyl-CoA = 1-O-(1Z)-alkenyl-2-(9Z)-octadecenoyl-sn-glycero-3-phosphoethanolamine + CoA. The catalysed reaction is 1-octadecanoyl-sn-glycero-3-phosphoethanolamine + (9Z)-octadecenoyl-CoA = 1-octadecanoyl-2-(9Z-octadecenoyl)-sn-glycero-3-phosphoethanolamine + CoA. The enzyme catalyses 1-(9Z-octadecenoyl)-sn-glycero-3-phosphoethanolamine + (9Z)-octadecenoyl-CoA = 1,2-di-(9Z-octadecenoyl)-sn-glycero-3-phosphoethanolamine + CoA. It catalyses the reaction 1-hexadecanoyl-sn-glycero-3-phosphoethanolamine + (9Z)-octadecenoyl-CoA = 1-hexadecanoyl-2-(9Z-octadecenoyl)-sn-glycero-3-phosphoethanolamine + CoA. It carries out the reaction 1-(10Z-heptadecenoyl)-sn-glycero-3-phosphoethanolamine + hexadecanoyl-CoA = 1-(10Z-heptadecenoyl)-2-hexadecanoyl-sn-glycero-3-phosphoethanolamine + CoA. The catalysed reaction is 1-(10Z-heptadecenoyl)-sn-glycero-3-phosphoethanolamine + (9Z)-octadecenoyl-CoA = 1-(10Z-heptadecenoyl)-2-(9Z-octadecenoyl)-sn-glycero-3-phosphoethanolamine + CoA. The protein operates within lipid metabolism; phospholipid metabolism. Its activity is regulated as follows. Partially inhibited by thimerosal. Acyltransferase which catalyzes the transfer of an acyl group from an acyl-CoA towards a lysophospholipid producing a phospholipid and participates in the reacylation step of the phospholipid remodeling pathway also known as the Lands cycle. Acts on lysophosphatidylserine (1-acyl-2-hydroxy-sn-glycero-3-phospho-L-serine or LPS) and lysophosphatidylethanolamine (1-acyl-sn-glycero-3-phosphoethanolamine or LPE), and to a lesser extend lysophosphatidylcholine. Prefers oleoyl-CoA as the acyl donor and 1-oleoyl-LPE as acceptor. May play a role in neurite outgrowth during neuronal differentiation. The sequence is that of Membrane-bound glycerophospholipid O-acyltransferase 1 from Homo sapiens (Human).